Reading from the N-terminus, the 1288-residue chain is 5-oxoprolinase (1288 aa).

Phosphothreonine is present on Thr-151. A disordered region spans residues 1249–1269 (GGGGYGDPEDPAPLPGSPLQP). Ser-1265 carries the post-translational modification Phosphoserine.

This sequence belongs to the oxoprolinase family. As to quaternary structure, homodimer. As to expression, expressed in coronary artery and kidney.

It localises to the cytoplasm. The protein resides in the cytosol. It catalyses the reaction 5-oxo-L-proline + ATP + 2 H2O = L-glutamate + ADP + phosphate + H(+). Functionally, catalyzes the cleavage of 5-oxo-L-proline to form L-glutamate coupled to the hydrolysis of ATP to ADP and inorganic phosphate. This Bos taurus (Bovine) protein is 5-oxoprolinase (OPLAH).